Consider the following 465-residue polypeptide: Cysteine--tRNA ligase (465 aa).

Residue Cys27 coordinates Zn(2+). The 'HIGH' region signature appears at 29–39 (PTVYNFFHIGN). Zn(2+) contacts are provided by Cys207, His232, and Glu236. The short motif at 264–268 (KMSKS) is the 'KMSKS' region element. Lys267 provides a ligand contact to ATP.

Belongs to the class-I aminoacyl-tRNA synthetase family. Monomer. Zn(2+) serves as cofactor.

It localises to the cytoplasm. The enzyme catalyses tRNA(Cys) + L-cysteine + ATP = L-cysteinyl-tRNA(Cys) + AMP + diphosphate. This is Cysteine--tRNA ligase from Clostridium botulinum (strain Okra / Type B1).